Reading from the N-terminus, the 142-residue chain is Large ribosomal subunit protein uL13 (142 aa).

Belongs to the universal ribosomal protein uL13 family. In terms of assembly, part of the 50S ribosomal subunit.

In terms of biological role, this protein is one of the early assembly proteins of the 50S ribosomal subunit, although it is not seen to bind rRNA by itself. It is important during the early stages of 50S assembly. This is Large ribosomal subunit protein uL13 from Histophilus somni (strain 129Pt) (Haemophilus somnus).